A 569-amino-acid chain; its full sequence is Proline--tRNA ligase (569 aa).

Belongs to the class-II aminoacyl-tRNA synthetase family. ProS type 1 subfamily. Homodimer.

The protein resides in the cytoplasm. The catalysed reaction is tRNA(Pro) + L-proline + ATP = L-prolyl-tRNA(Pro) + AMP + diphosphate. Its function is as follows. Catalyzes the attachment of proline to tRNA(Pro) in a two-step reaction: proline is first activated by ATP to form Pro-AMP and then transferred to the acceptor end of tRNA(Pro). As ProRS can inadvertently accommodate and process non-cognate amino acids such as alanine and cysteine, to avoid such errors it has two additional distinct editing activities against alanine. One activity is designated as 'pretransfer' editing and involves the tRNA(Pro)-independent hydrolysis of activated Ala-AMP. The other activity is designated 'posttransfer' editing and involves deacylation of mischarged Ala-tRNA(Pro). The misacylated Cys-tRNA(Pro) is not edited by ProRS. This is Proline--tRNA ligase from Campylobacter jejuni subsp. doylei (strain ATCC BAA-1458 / RM4099 / 269.97).